Here is a 389-residue protein sequence, read N- to C-terminus: Phosphoglycerate kinase (389 aa).

Residues 19–21 (DYN), arginine 34, 57–60 (HLGR), arginine 117, and arginine 150 each bind substrate. Residues lysine 200, glycine 288, glutamate 319, and 347-350 (GGDS) each bind ATP.

This sequence belongs to the phosphoglycerate kinase family. In terms of assembly, monomer.

It localises to the cytoplasm. The catalysed reaction is (2R)-3-phosphoglycerate + ATP = (2R)-3-phospho-glyceroyl phosphate + ADP. It functions in the pathway carbohydrate degradation; glycolysis; pyruvate from D-glyceraldehyde 3-phosphate: step 2/5. The polypeptide is Phosphoglycerate kinase (Deinococcus geothermalis (strain DSM 11300 / CIP 105573 / AG-3a)).